The following is a 610-amino-acid chain: Fimbrin (610 aa).

EF-hand domains lie at 7–42 and 43–78; these read SEIS…CGEK and VTGV…ARQH. Ca(2+)-binding residues include aspartate 20, asparagine 22, aspartate 24, glutamine 26, glutamate 31, aspartate 56, aspartate 58, asparagine 60, serine 62, and glutamate 67. Actin-binding stretches follow at residues 102 to 365 and 366 to 608; these read YSGS…NTHP and ALEP…QVEM. Calponin-homology (CH) domains follow at residues 116–232, 260–365, 379–488, and 501–608; these read DEEK…KIGL, LPVE…NTHP, TREE…RGHV, and PIAD…QVEM.

In terms of biological role, binds to actin. The protein is Fimbrin (fimA) of Dictyostelium discoideum (Social amoeba).